A 130-amino-acid polypeptide reads, in one-letter code: Small ribosomal subunit protein uS11c (130 aa).

It belongs to the universal ribosomal protein uS11 family. Part of the 30S ribosomal subunit.

It is found in the plastid. This Aneura mirabilis (Parasitic liverwort) protein is Small ribosomal subunit protein uS11c.